Here is a 418-residue protein sequence, read N- to C-terminus: Histidine--tRNA ligase (418 aa).

Belongs to the class-II aminoacyl-tRNA synthetase family.

Its subcellular location is the cytoplasm. It catalyses the reaction tRNA(His) + L-histidine + ATP = L-histidyl-tRNA(His) + AMP + diphosphate + H(+). This chain is Histidine--tRNA ligase, found in Methanococcus maripaludis (strain C7 / ATCC BAA-1331).